Here is a 477-residue protein sequence, read N- to C-terminus: Stromelysin-3 (477 aa).

The first 17 residues, 1–17, serve as a signal peptide directing secretion; the sequence is MHLLILLPALCVLGAHS. Residues 18–85 constitute a propeptide, activation peptide; the sequence is APLSYTYLQH…SSSGRNRQKR (68 aa). The interval 64-83 is disordered; the sequence is RCGVPDIPAPPDSSSGRNRQ. 3 residues coordinate Zn(2+): C65, H152, and D154. 4 residues coordinate Ca(2+): D159, G160, G162, and I164. Zn(2+) contacts are provided by H167, H180, and H203. E204 is an active-site residue. Zn(2+) contacts are provided by H207 and H213. C279 and C466 are disulfide-bonded. Hemopexin repeat units lie at residues 280 to 324, 325 to 369, 370 to 418, and 419 to 466; these read KTNF…WRGI, PDTV…GISV, TQIQ…WRGV, and PKGI…FFNC.

Belongs to the peptidase M10A family. The cofactor is Ca(2+). Requires Zn(2+) as cofactor. In terms of tissue distribution, expressed in fibroblast cells that are activated by thyroid hormone. High levels in resorbing tail.

It localises to the secreted. It is found in the extracellular space. The protein resides in the extracellular matrix. In terms of biological role, may be involved in the modification of the extracellular matrix during metamorphic apoptosis. This chain is Stromelysin-3 (mmp11), found in Xenopus laevis (African clawed frog).